The primary structure comprises 430 residues: Dihydroorotase (430 aa).

Zn(2+) contacts are provided by His-57 and His-59. Substrate contacts are provided by residues 59-61 and Asn-91; that span reads HLR. 3 residues coordinate Zn(2+): Asp-151, His-178, and His-231. A substrate-binding site is contributed by Asn-277. Position 304 (Asp-304) interacts with Zn(2+). Asp-304 is a catalytic residue. Substrate-binding positions include His-308 and 322–323; that span reads PG.

The protein belongs to the metallo-dependent hydrolases superfamily. DHOase family. Class I DHOase subfamily. The cofactor is Zn(2+).

It carries out the reaction (S)-dihydroorotate + H2O = N-carbamoyl-L-aspartate + H(+). It participates in pyrimidine metabolism; UMP biosynthesis via de novo pathway; (S)-dihydroorotate from bicarbonate: step 3/3. Catalyzes the reversible cyclization of carbamoyl aspartate to dihydroorotate. This Mycobacterium leprae (strain TN) protein is Dihydroorotase.